Consider the following 348-residue polypeptide: Putative 4-hydroxythreonine-4-phosphate dehydrogenase 2 (348 aa).

A divalent metal cation contacts are provided by H180, H224, and H279.

The protein belongs to the PdxA family. In terms of assembly, homodimer. Zn(2+) is required as a cofactor. The cofactor is Mg(2+). It depends on Co(2+) as a cofactor.

It is found in the cytoplasm. It catalyses the reaction 4-(phosphooxy)-L-threonine + NAD(+) = 3-amino-2-oxopropyl phosphate + CO2 + NADH. Its pathway is cofactor biosynthesis; pyridoxine 5'-phosphate biosynthesis; pyridoxine 5'-phosphate from D-erythrose 4-phosphate: step 4/5. Functionally, catalyzes the NAD(P)-dependent oxidation of 4-(phosphooxy)-L-threonine (HTP) into 2-amino-3-oxo-4-(phosphooxy)butyric acid which spontaneously decarboxylates to form 3-amino-2-oxopropyl phosphate (AHAP). This chain is Putative 4-hydroxythreonine-4-phosphate dehydrogenase 2, found in Rhizobium meliloti (strain 1021) (Ensifer meliloti).